The following is a 328-amino-acid chain: Alanine racemase (328 aa).

K33 acts as the Proton acceptor; specific for D-alanine in catalysis. The residue at position 33 (K33) is an N6-(pyridoxal phosphate)lysine. Substrate is bound at residue R118. The active-site Proton acceptor; specific for L-alanine is Y237. Substrate is bound at residue M283.

The protein belongs to the alanine racemase family. Pyridoxal 5'-phosphate is required as a cofactor.

It catalyses the reaction L-alanine = D-alanine. The protein operates within amino-acid biosynthesis; D-alanine biosynthesis; D-alanine from L-alanine: step 1/1. Functionally, catalyzes the interconversion of L-alanine and D-alanine. May also act on other amino acids. This Campylobacter jejuni (strain RM1221) protein is Alanine racemase (alr).